We begin with the raw amino-acid sequence, 378 residues long: Fructose-1,6-bisphosphatase class 1 2 (378 aa).

4 residues coordinate Mg(2+): glutamate 98, aspartate 120, leucine 122, and aspartate 123. Residues 123-126 and asparagine 227 contribute to the substrate site; that span reads DGSS. Glutamate 299 is a binding site for Mg(2+).

This sequence belongs to the FBPase class 1 family. In terms of assembly, homotetramer. The cofactor is Mg(2+).

The protein resides in the cytoplasm. The catalysed reaction is beta-D-fructose 1,6-bisphosphate + H2O = beta-D-fructose 6-phosphate + phosphate. Its pathway is carbohydrate biosynthesis; gluconeogenesis. The protein is Fructose-1,6-bisphosphatase class 1 2 of Paraburkholderia xenovorans (strain LB400).